Consider the following 633-residue polypeptide: tRNA uridine 5-carboxymethylaminomethyl modification enzyme MnmG (633 aa).

FAD contacts are provided by residues 15-20 (GAGHAG), Ile-127, and Ser-182. Position 276–290 (276–290 (GPRYCPSIEDKIVRF)) interacts with NAD(+). Gln-373 is an FAD binding site.

This sequence belongs to the MnmG family. Homodimer. Heterotetramer of two MnmE and two MnmG subunits. Requires FAD as cofactor.

It is found in the cytoplasm. Functionally, NAD-binding protein involved in the addition of a carboxymethylaminomethyl (cmnm) group at the wobble position (U34) of certain tRNAs, forming tRNA-cmnm(5)s(2)U34. The protein is tRNA uridine 5-carboxymethylaminomethyl modification enzyme MnmG of Streptococcus agalactiae serotype Ia (strain ATCC 27591 / A909 / CDC SS700).